The chain runs to 544 residues: CTP synthase (544 aa).

Residues 1–265 (MARFIFITGG…DEAVLSAFGI (265 aa)) are amidoligase domain. Residue Ser13 coordinates CTP. Ser13 serves as a coordination point for UTP. An ATP-binding site is contributed by 14-19 (SLGKGL). Tyr54 is an L-glutamine binding site. ATP is bound at residue Asp71. Mg(2+)-binding residues include Asp71 and Glu139. Residues 146–148 (DIE), 186–191 (KTKPTQ), and Lys222 contribute to the CTP site. UTP-binding positions include 186-191 (KTKPTQ) and Lys222. Positions 291-543 (TIGVVGKYVG…IAAALQQSRL (253 aa)) constitute a Glutamine amidotransferase type-1 domain. Gly355 contributes to the L-glutamine binding site. Cys382 serves as the catalytic Nucleophile; for glutamine hydrolysis. L-glutamine is bound by residues 383–386 (LGMQ), Glu406, and Arg471. Active-site residues include His516 and Glu518.

The protein belongs to the CTP synthase family. Homotetramer.

The catalysed reaction is UTP + L-glutamine + ATP + H2O = CTP + L-glutamate + ADP + phosphate + 2 H(+). It carries out the reaction L-glutamine + H2O = L-glutamate + NH4(+). It catalyses the reaction UTP + NH4(+) + ATP = CTP + ADP + phosphate + 2 H(+). It functions in the pathway pyrimidine metabolism; CTP biosynthesis via de novo pathway; CTP from UDP: step 2/2. With respect to regulation, allosterically activated by GTP, when glutamine is the substrate; GTP has no effect on the reaction when ammonia is the substrate. The allosteric effector GTP functions by stabilizing the protein conformation that binds the tetrahedral intermediate(s) formed during glutamine hydrolysis. Inhibited by the product CTP, via allosteric rather than competitive inhibition. Its function is as follows. Catalyzes the ATP-dependent amination of UTP to CTP with either L-glutamine or ammonia as the source of nitrogen. Regulates intracellular CTP levels through interactions with the four ribonucleotide triphosphates. The sequence is that of CTP synthase from Rhizorhabdus wittichii (strain DSM 6014 / CCUG 31198 / JCM 15750 / NBRC 105917 / EY 4224 / RW1) (Sphingomonas wittichii).